The following is a 444-amino-acid chain: MIAVPTGAAAAPRGPIPFYKHLYVQVLVAIAAGILLGHFYPELGTQLKPLGDAFIKLVKMIIAPVIFLTVATGIAGMTDMKKVGRVAGKAMIYFLTFSTLALIIGLIVANVVQPGAGMHIDPASLDPKAVANYAAKAHEQTITGFLSNIIPTTIVGAFADGDILQVLFFSVLFGIALALVGDKGKPVTDFLHVLTAPVFKLVSILMKAAPIGAFGAMAFTIGKYGIGSIANLALLIGTFYLTALLFVLVVLGAVARYNGFSILALIRYIKEELLLVLGTSSSEAALPALMDKMEKAGCKRSVVGLVIPTGYSFNLDGTNIYMTLAALFIAQATDIPLSLSDQILLLLVAMLSSKGAAGITGAGFITLAATLSVVPAVPVAGMALILGIDRFMSECRALTNLVGNAVATIVVARWENELDTDKLAAAMNGTPVVTDLVPQLEPAE.

Transmembrane regions (helical) follow at residues 21-41, 57-77, 92-112, 161-181, 201-221, 234-254, 320-340, 345-365, and 368-388; these read HLYVQVLVAIAAGILLGHFYP, LVKMIIAPVIFLTVATGIAGM, IYFLTFSTLALIIGLIVANVV, GDILQVLFFSVLFGIALALVG, LVSILMKAAPIGAFGAMAFTI, LLIGTFYLTALLFVLVVLGAV, IYMTLAALFIAQATDIPLSLS, LLLVAMLSSKGAAGITGAGFI, and AATLSVVPAVPVAGMALILGI.

The protein belongs to the dicarboxylate/amino acid:cation symporter (DAACS) (TC 2.A.23) family.

It is found in the cell inner membrane. Responsible for the transport of dicarboxylates such as succinate, fumarate, and malate from the periplasm across the membrane. The polypeptide is C4-dicarboxylate transport protein (Brucella anthropi (strain ATCC 49188 / DSM 6882 / CCUG 24695 / JCM 21032 / LMG 3331 / NBRC 15819 / NCTC 12168 / Alc 37) (Ochrobactrum anthropi)).